A 457-amino-acid polypeptide reads, in one-letter code: Biphenyl dioxygenase subunit alpha (457 aa).

The 117-residue stretch at 58 to 174 (WLMLGHETHI…VETYKGLVFA (117 aa)) folds into the Rieske domain. 4 residues coordinate [2Fe-2S] cluster: cysteine 100, histidine 102, cysteine 120, and histidine 123. Positions 233 and 239 each coordinate Fe cation.

This sequence belongs to the bacterial ring-hydroxylating dioxygenase alpha subunit family. Heterohexamer consisting of three BphA subunits and three BphE subunits. A ferredoxin (BphF) and a ferredoxin reductase (BphG) must be present to obtain activity. Requires [2Fe-2S] cluster as cofactor. The cofactor is Fe cation.

It carries out the reaction biphenyl + NADH + O2 + H(+) = (2R,3S)-3-phenylcyclohexa-3,5-diene-1,2-diol + NAD(+). It functions in the pathway xenobiotic degradation; biphenyl degradation; 2-hydroxy-2,4-pentadienoate and benzoate from biphenyl: step 1/4. The polypeptide is Biphenyl dioxygenase subunit alpha (bphA) (Comamonas testosteroni (Pseudomonas testosteroni)).